The chain runs to 103 residues: Small ribosomal subunit protein uS10 (103 aa).

The protein belongs to the universal ribosomal protein uS10 family. Part of the 30S ribosomal subunit.

Functionally, involved in the binding of tRNA to the ribosomes. The polypeptide is Small ribosomal subunit protein uS10 (Natranaerobius thermophilus (strain ATCC BAA-1301 / DSM 18059 / JW/NM-WN-LF)).